Reading from the N-terminus, the 361-residue chain is Queuine tRNA-ribosyltransferase (361 aa).

Catalysis depends on Asp92, which acts as the Proton acceptor. Substrate-binding positions include 92–96 (DSGGF), Asp146, Gln189, and Gly216. Residues 247–253 (GVGKPAD) are RNA binding. Asp266 functions as the Nucleophile in the catalytic mechanism. The RNA binding; important for wobble base 34 recognition stretch occupies residues 271–275 (TRAGR). Cys304, Cys306, Cys309, and His335 together coordinate Zn(2+).

This sequence belongs to the queuine tRNA-ribosyltransferase family. In terms of assembly, homodimer. Within each dimer, one monomer is responsible for RNA recognition and catalysis, while the other monomer binds to the replacement base PreQ1. It depends on Zn(2+) as a cofactor.

It carries out the reaction 7-aminomethyl-7-carbaguanine + guanosine(34) in tRNA = 7-aminomethyl-7-carbaguanosine(34) in tRNA + guanine. The protein operates within tRNA modification; tRNA-queuosine biosynthesis. Functionally, catalyzes the base-exchange of a guanine (G) residue with the queuine precursor 7-aminomethyl-7-deazaguanine (PreQ1) at position 34 (anticodon wobble position) in tRNAs with GU(N) anticodons (tRNA-Asp, -Asn, -His and -Tyr). Catalysis occurs through a double-displacement mechanism. The nucleophile active site attacks the C1' of nucleotide 34 to detach the guanine base from the RNA, forming a covalent enzyme-RNA intermediate. The proton acceptor active site deprotonates the incoming PreQ1, allowing a nucleophilic attack on the C1' of the ribose to form the product. After dissociation, two additional enzymatic reactions on the tRNA convert PreQ1 to queuine (Q), resulting in the hypermodified nucleoside queuosine (7-(((4,5-cis-dihydroxy-2-cyclopenten-1-yl)amino)methyl)-7-deazaguanosine). The chain is Queuine tRNA-ribosyltransferase from Rickettsia massiliae (strain Mtu5).